Reading from the N-terminus, the 493-residue chain is ATP synthase subunit beta, chloroplastic (493 aa).

An ATP-binding site is contributed by 170–177 (GGAGVGKT).

Belongs to the ATPase alpha/beta chains family. In terms of assembly, F-type ATPases have 2 components, CF(1) - the catalytic core - and CF(0) - the membrane proton channel. CF(1) has five subunits: alpha(3), beta(3), gamma(1), delta(1), epsilon(1). CF(0) has four main subunits: a(1), b(1), b'(1) and c(9-12).

Its subcellular location is the plastid. The protein localises to the chloroplast thylakoid membrane. The catalysed reaction is ATP + H2O + 4 H(+)(in) = ADP + phosphate + 5 H(+)(out). Produces ATP from ADP in the presence of a proton gradient across the membrane. The catalytic sites are hosted primarily by the beta subunits. This Chaetosphaeridium globosum (Charophycean green alga) protein is ATP synthase subunit beta, chloroplastic.